The chain runs to 510 residues: Probable ADP-ribosylation factor-binding protein C1F3.05 (510 aa).

Residues 14 to 150 (ATDQFNLEPN…LMAFRGYKFP (137 aa)) form the VHS domain. A GAT domain is found at 177 to 301 (LEAHKAKLQE…VIEECSNSDL (125 aa)). A GAE domain is found at 391–510 (TNSSLTSILQ…VEQGESHLPL (120 aa)).

The protein localises to the golgi apparatus. The protein resides in the trans-Golgi network. In terms of biological role, may play a role in the regulation of membrane traffic through the trans-Golgi network. The polypeptide is Probable ADP-ribosylation factor-binding protein C1F3.05 (Schizosaccharomyces pombe (strain 972 / ATCC 24843) (Fission yeast)).